We begin with the raw amino-acid sequence, 456 residues long: tRNA modification GTPase MnmE (456 aa).

Positions 21, 85, and 124 each coordinate (6S)-5-formyl-5,6,7,8-tetrahydrofolate. Residues 220–379 (QFRIVLYGEP…LLDAIKERTG (160 aa)) form the TrmE-type G domain. K(+) is bound at residue Asn230. Residues 230–235 (NTGKSS), 249–255 (SEIPGTT), and 274–277 (DTAG) each bind GTP. Mg(2+) is bound at residue Ser234. 3 residues coordinate K(+): Ser249, Ile251, and Thr254. Residue Thr255 coordinates Mg(2+). Position 456 (Lys456) interacts with (6S)-5-formyl-5,6,7,8-tetrahydrofolate.

The protein belongs to the TRAFAC class TrmE-Era-EngA-EngB-Septin-like GTPase superfamily. TrmE GTPase family. As to quaternary structure, homodimer. Heterotetramer of two MnmE and two MnmG subunits. K(+) serves as cofactor.

It localises to the cytoplasm. Exhibits a very high intrinsic GTPase hydrolysis rate. Involved in the addition of a carboxymethylaminomethyl (cmnm) group at the wobble position (U34) of certain tRNAs, forming tRNA-cmnm(5)s(2)U34. The chain is tRNA modification GTPase MnmE from Leptospira interrogans serogroup Icterohaemorrhagiae serovar copenhageni (strain Fiocruz L1-130).